The chain runs to 454 residues: Toluate 1,2-dioxygenase subunit alpha (454 aa).

The 98-residue stretch at 51–148 (IYLAHESQIP…SFDCDGSHDL (98 aa)) folds into the Rieske domain. The [2Fe-2S] cluster site is built by Cys-92, His-94, Cys-112, and His-115. The Fe cation site is built by His-221 and His-226.

This sequence belongs to the bacterial ring-hydroxylating dioxygenase alpha subunit family. In terms of assembly, this dioxygenase system consists of three proteins: the two subunits of the hydroxylase component (XylX and XylY), and an electron transfer component (XylZ). [2Fe-2S] cluster serves as cofactor. Fe cation is required as a cofactor.

The protein operates within xenobiotic degradation; toluene degradation. The protein is Toluate 1,2-dioxygenase subunit alpha (xylX) of Pseudomonas putida (Arthrobacter siderocapsulatus).